Reading from the N-terminus, the 60-residue chain is UPF0337 protein asr4653 (60 aa).

This sequence belongs to the UPF0337 (CsbD) family.

In Nostoc sp. (strain PCC 7120 / SAG 25.82 / UTEX 2576), this protein is UPF0337 protein asr4653.